The sequence spans 437 residues: Amino-acid acetyltransferase (437 aa).

One can recognise an N-acetyltransferase domain in the interval 289-429 (ENIRLATSFD…EHYNYQRMSK (141 aa)).

The protein belongs to the acetyltransferase family. ArgA subfamily.

It is found in the cytoplasm. The catalysed reaction is L-glutamate + acetyl-CoA = N-acetyl-L-glutamate + CoA + H(+). Its pathway is amino-acid biosynthesis; L-arginine biosynthesis; N(2)-acetyl-L-ornithine from L-glutamate: step 1/4. The sequence is that of Amino-acid acetyltransferase from Actinobacillus pleuropneumoniae serotype 7 (strain AP76).